We begin with the raw amino-acid sequence, 417 residues long: Gamma-glutamyl phosphate reductase (417 aa).

This sequence belongs to the gamma-glutamyl phosphate reductase family.

The protein localises to the cytoplasm. The catalysed reaction is L-glutamate 5-semialdehyde + phosphate + NADP(+) = L-glutamyl 5-phosphate + NADPH + H(+). The protein operates within amino-acid biosynthesis; L-proline biosynthesis; L-glutamate 5-semialdehyde from L-glutamate: step 2/2. Its function is as follows. Catalyzes the NADPH-dependent reduction of L-glutamate 5-phosphate into L-glutamate 5-semialdehyde and phosphate. The product spontaneously undergoes cyclization to form 1-pyrroline-5-carboxylate. This is Gamma-glutamyl phosphate reductase from Phocaeicola vulgatus (strain ATCC 8482 / DSM 1447 / JCM 5826 / CCUG 4940 / NBRC 14291 / NCTC 11154) (Bacteroides vulgatus).